A 181-amino-acid polypeptide reads, in one-letter code: Translation initiation factor IF-3 (181 aa).

This sequence belongs to the IF-3 family. In terms of assembly, monomer.

It localises to the cytoplasm. Its function is as follows. IF-3 binds to the 30S ribosomal subunit and shifts the equilibrium between 70S ribosomes and their 50S and 30S subunits in favor of the free subunits, thus enhancing the availability of 30S subunits on which protein synthesis initiation begins. The polypeptide is Translation initiation factor IF-3 (Cereibacter sphaeroides (strain ATCC 17023 / DSM 158 / JCM 6121 / CCUG 31486 / LMG 2827 / NBRC 12203 / NCIMB 8253 / ATH 2.4.1.) (Rhodobacter sphaeroides)).